A 594-amino-acid polypeptide reads, in one-letter code: Adenine deaminase 1 (594 aa).

This sequence belongs to the metallo-dependent hydrolases superfamily. Adenine deaminase family. The cofactor is Mn(2+).

It carries out the reaction adenine + H2O + H(+) = hypoxanthine + NH4(+). The polypeptide is Adenine deaminase 1 (Desulfotalea psychrophila (strain LSv54 / DSM 12343)).